The following is a 454-amino-acid chain: SSMEPEMEQKVKDQHMERCVNLLVDELGVYSTAQEAWERIYHVSALEALHIRNGHIKNPSAQTKERYQEFLRFENDFSNCLAVSALKTKFGPHLLSAQKILNQLKSTLISPFIEKVSRLIDENKERRANLNAEIEEWELEMQDEREDLQYCFEELTEMTQRLGRCVLNDQIKTLIPSAVLSFSHPFHPEFPAQIGQYQRSLCAHLDNLLEDRVLQCLSIPLQRKILDMEKELGLQITEKSCDWQLIYGLDCQSYMSDFQPDLRFRFSLGFTALWHRLEGNLPLHSSPFRTQKLRNGHKKCLPLPPLVHGNHWQMLESLVKSKGSLGTVLLGAMAIRSFNWPIVMILGGLVGSFYMYEYAAWTTAAQERSFKSQYSRLLQQRLRTDVQQTVSGFELQLRQHLAKVRNCWEAQSNETLNDLNVRTAELTKQIQSMEVLQLSLKKFRDKGQLLASRL.

The Dynamin-type G domain maps to 1 to 111 (SSMEPEMEQK…NQLKSTLISP (111 aa)). The Cytoplasmic segment spans residues 1-322 (SSMEPEMEQK…QMLESLVKSK (322 aa)). Residues 30–33 (YSTA) are G5 motif. Ser44 is a GTP binding site. Positions 112–162 (FIEKVSRLIDENKERRANLNAEIEEWELEMQDEREDLQYCFEELTEMTQRL) form a coiled coil. Residues 323 to 335 (GSLGTVLLGAMAI) form a helical membrane-spanning segment. Topologically, residues 336 to 338 (RSF) are mitochondrial intermembrane. Residues 339-361 (NWPIVMILGGLVGSFYMYEYAAW) form a helical membrane-spanning segment. The Cytoplasmic segment spans residues 362–454 (TTAAQERSFK…DKGQLLASRL (93 aa)). Residues 411-434 (QSNETLNDLNVRTAELTKQIQSME) adopt a coiled-coil conformation.

This sequence belongs to the TRAFAC class dynamin-like GTPase superfamily. Dynamin/Fzo/YdjA family. Mitofusin subfamily.

It is found in the mitochondrion outer membrane. The enzyme catalyses GTP + H2O = GDP + phosphate + H(+). In terms of biological role, essential transmembrane GTPase, which mediates mitochondrial fusion during spermatogenesis. In early spermatocytes, fusion of mitochondria give rise to two organelles named Nebenkern and constitutes an important step in mitochondria morphology, which is balanced between fusion and fission. Essential for fertility. This is Transmembrane GTPase fzo (fzo) from Drosophila simulans (Fruit fly).